We begin with the raw amino-acid sequence, 486 residues long: UDP-N-acetylmuramate--L-alanine ligase (486 aa).

Residue 129 to 135 participates in ATP binding; the sequence is GTHGKTT.

The protein belongs to the MurCDEF family.

The protein localises to the cytoplasm. It catalyses the reaction UDP-N-acetyl-alpha-D-muramate + L-alanine + ATP = UDP-N-acetyl-alpha-D-muramoyl-L-alanine + ADP + phosphate + H(+). Its pathway is cell wall biogenesis; peptidoglycan biosynthesis. Its function is as follows. Cell wall formation. The chain is UDP-N-acetylmuramate--L-alanine ligase from Vibrio vulnificus (strain CMCP6).